Consider the following 830-residue polypeptide: C-Jun-amino-terminal kinase-interacting protein 2 (830 aa).

Disordered regions lie at residues 1–26, 44–354, 367–438, 452–504, and 539–574; these read MADR…PPQD, CGLG…ADSP, EGSS…PGPC, LWAT…GSTA, and GNDS…PDSP. Residues 77-105 are compositionally biased toward acidic residues; the sequence is DFQEFEMIDDNEEEDDEEEEEEEEEEEDG. The interval 111 to 278 is JNK-binding domain (JBD); that stretch reads AGGGPGSQAL…RMISSISETE (168 aa). A compositionally biased stretch (polar residues) spans 142–172; that stretch reads LHLTTLGAQDSLNNNNGGFTSAPPSSWQETV. 2 stretches are compositionally biased toward low complexity: residues 176–190 and 218–227; these read PAQE…PLLP and ASSGGASPSS. Basic and acidic residues predominate over residues 233–249; it reads ADLRSHSSGGHEGRRSS. Positions 242 to 504 are necessary for interaction with FGF13; it reads GHEGRRSSQE…PGSRTTGSTA (263 aa). Residues S257, S304, and S307 each carry the phosphoserine modification. Residues 271–307 are compositionally biased toward low complexity; the sequence is ISSISETELELSSDGGSSSGRSSHLTNSIEEASSPAS. Residues 333–352 show a composition bias toward acidic residues; that stretch reads TNSEYESGSESEPDLSEDAD. The segment covering 427 to 437 has biased composition (low complexity); the sequence is APRLGPAQPGP. Composition is skewed to acidic residues over residues 471–490 and 541–555; these read SEEE…DAED and DSEE…EEEA. Residues 610 to 671 enclose the SH3 domain; that stretch reads EREQTHRAVF…PAFYAHAVPG (62 aa). A PID domain is found at 683–819; sequence PCWVDRFDVQ…FLEYYQEHLA (137 aa).

This sequence belongs to the JIP scaffold family. In terms of assembly, forms homo- or heterooligomeric complexes. Binds specific components of the JNK signaling pathway namely JNK1, JNK2, JNK3, MAP2K7, MAP3K10, MAP3K11, MAP3K12 and MAPK13. Also binds the proline-rich domain-containing splice variant of apolipoprotein E receptor 2 (ApoER2). Binds the TPR motif-containing C-terminal of kinesin light chain. Binds the cytoplasmic tails of LRP1 and LRP2 (Megalin). Interacts with DCLK2. Interacts with FGF13; enables the interaction with MAPK13 and may regulate the MAPK8IP2 scaffolding activity. Interacts with TIAM1 and TIAM2. Interacts with SH3RF2. In terms of tissue distribution, highly expressed in brain. Expressed in all neurons. Also expressed in testis, primarily in the epididymal epidermis.

The protein localises to the cytoplasm. The JNK-interacting protein (JIP) group of scaffold proteins selectively mediates JNK signaling by aggregating specific components of the MAPK cascade to form a functional JNK signaling module. JIP2 inhibits IL1 beta-induced apoptosis in insulin-secreting cells. The protein is C-Jun-amino-terminal kinase-interacting protein 2 (Mapk8ip2) of Mus musculus (Mouse).